Reading from the N-terminus, the 288-residue chain is Wilms tumor protein homolog (288 aa).

The tract at residues 1-21 (QGYSTVAFDGPPSYGHAPSHH) is disordered. A 9aaTAD motif is present at residues 90–98 (MTWNQMNLG). 3 C2H2-type zinc fingers span residues 162–186 (FMCAYPGCNKRYFKLSHLQMHSRKH), 192–216 (YQCDFKDCERRFSRSDQLKRHQRRH), and 222–244 (FQCKTCQRKFSRSDHLKTHTRTH). Important for interaction with target DNA stretches follow at residues 206 to 220 (SDQLKRHQRRHTGVK) and 232 to 240 (SRSDHLKTH). The KTS motif motif lies at 247 to 249 (KTS). The C2H2-type 4 zinc finger occupies 253-277 (FSCRWPSCQKKFARSDELVRHHNMH).

The protein belongs to the EGR C2H2-type zinc-finger protein family.

Its subcellular location is the nucleus speckle. The protein resides in the nucleus. It localises to the nucleoplasm. The protein localises to the cytoplasm. Functionally, transcription factor that plays an important role in cellular development and cell survival. Recognizes and binds to the DNA sequence 5'-GCG(T/G)GGGCG-3'. Regulates the expression of numerous target genes. Plays an essential role for development of the urogenital system. It has a tumor suppressor as well as an oncogenic role in tumor formation. Function may be isoform-specific: isoforms lacking the KTS motif may act as transcription factors. Isoforms containing the KTS motif may bind mRNA and play a role in mRNA metabolism or splicing. This Alligator mississippiensis (American alligator) protein is Wilms tumor protein homolog (WT1).